A 240-amino-acid chain; its full sequence is Octanoyltransferase (240 aa).

The BPL/LPL catalytic domain maps to 31–216; that stretch reads GQVGDTLLLL…HLCAVFDLEP (186 aa). Residues 76–83, 145–147, and 159–161 contribute to the substrate site; these read RGGGATYH, AIG, and GLA. Cys-177 functions as the Acyl-thioester intermediate in the catalytic mechanism.

It belongs to the LipB family.

It is found in the cytoplasm. The enzyme catalyses octanoyl-[ACP] + L-lysyl-[protein] = N(6)-octanoyl-L-lysyl-[protein] + holo-[ACP] + H(+). It functions in the pathway protein modification; protein lipoylation via endogenous pathway; protein N(6)-(lipoyl)lysine from octanoyl-[acyl-carrier-protein]: step 1/2. Functionally, catalyzes the transfer of endogenously produced octanoic acid from octanoyl-acyl-carrier-protein onto the lipoyl domains of lipoate-dependent enzymes. Lipoyl-ACP can also act as a substrate although octanoyl-ACP is likely to be the physiological substrate. The polypeptide is Octanoyltransferase (Roseiflexus sp. (strain RS-1)).